The sequence spans 304 residues: Acetylglutamate kinase (304 aa).

Substrate is bound by residues 69 to 70, Arg91, and Asn202; that span reads GG.

This sequence belongs to the acetylglutamate kinase family. ArgB subfamily.

It localises to the cytoplasm. The catalysed reaction is N-acetyl-L-glutamate + ATP = N-acetyl-L-glutamyl 5-phosphate + ADP. The protein operates within amino-acid biosynthesis; L-arginine biosynthesis; N(2)-acetyl-L-ornithine from L-glutamate: step 2/4. Catalyzes the ATP-dependent phosphorylation of N-acetyl-L-glutamate. In Caulobacter sp. (strain K31), this protein is Acetylglutamate kinase.